Reading from the N-terminus, the 137-residue chain is Putative pre-16S rRNA nuclease (137 aa).

Belongs to the YqgF nuclease family.

It is found in the cytoplasm. Functionally, could be a nuclease involved in processing of the 5'-end of pre-16S rRNA. The protein is Putative pre-16S rRNA nuclease of Bacillus mycoides (strain KBAB4) (Bacillus weihenstephanensis).